The sequence spans 508 residues: Glycogen synthase (508 aa).

Lys-27 is an ADP-alpha-D-glucose binding site.

It belongs to the glycosyltransferase 1 family. Bacterial/plant glycogen synthase subfamily.

The enzyme catalyses [(1-&gt;4)-alpha-D-glucosyl](n) + ADP-alpha-D-glucose = [(1-&gt;4)-alpha-D-glucosyl](n+1) + ADP + H(+). The protein operates within glycan biosynthesis; glycogen biosynthesis. In terms of biological role, synthesizes alpha-1,4-glucan chains using ADP-glucose. In Photobacterium profundum (strain SS9), this protein is Glycogen synthase.